A 183-amino-acid polypeptide reads, in one-letter code: MKKKIKEVIVVEGKDDISAVKNAVDAEVFQVNGHAVRKNKSIEILKLAYENKGLIILTDPDYAGEEIRKYLCKHFPNAKNAYISRVSGTKDGDIGVENASPEDIITALEKARFSLDNSVNIFNLDLMMDYNLIGKDNSADLRSLLGAELGIGYSNGKQFMAKLNRYGISLEEFKKAYEKINMK.

In terms of domain architecture, Toprim spans 6–90; that stretch reads KEVIVVEGKD…AYISRVSGTK (85 aa). 3 residues coordinate Mg(2+): Glu12, Asp59, and Asp61.

This sequence belongs to the ribonuclease M5 family. Mg(2+) is required as a cofactor.

It is found in the cytoplasm. It carries out the reaction Endonucleolytic cleavage of RNA, removing 21 and 42 nucleotides, respectively, from the 5'- and 3'-termini of a 5S-rRNA precursor.. Required for correct processing of both the 5' and 3' ends of 5S rRNA precursor. Cleaves both sides of a double-stranded region yielding mature 5S rRNA in one step. This chain is Ribonuclease M5, found in Fusobacterium nucleatum subsp. nucleatum (strain ATCC 25586 / DSM 15643 / BCRC 10681 / CIP 101130 / JCM 8532 / KCTC 2640 / LMG 13131 / VPI 4355).